Consider the following 57-residue polypeptide: MAVQQNKPTRSKRGMRRSHDALTAVTSLSVDQTSGEKHLRHHITADGFYRGRKVITK.

Residues 1–38 (MAVQQNKPTRSKRGMRRSHDALTAVTSLSVDQTSGEKH) form a disordered region. A compositionally biased stretch (polar residues) spans 24 to 33 (AVTSLSVDQT).

The protein belongs to the bacterial ribosomal protein bL32 family.

The polypeptide is Large ribosomal subunit protein bL32 (Enterobacter sp. (strain 638)).